The chain runs to 250 residues: tRNA (guanine-N(7)-)-methyltransferase (250 aa).

S-adenosyl-L-methionine is bound by residues Glu-86, Glu-111, Asp-138, and Asp-161. Asp-161 is an active-site residue. Substrate-binding positions include Lys-165, Asp-197, and 229-232 (TEFE).

This sequence belongs to the class I-like SAM-binding methyltransferase superfamily. TrmB family.

The enzyme catalyses guanosine(46) in tRNA + S-adenosyl-L-methionine = N(7)-methylguanosine(46) in tRNA + S-adenosyl-L-homocysteine. It participates in tRNA modification; N(7)-methylguanine-tRNA biosynthesis. In terms of biological role, catalyzes the formation of N(7)-methylguanine at position 46 (m7G46) in tRNA. This Treponema pallidum (strain Nichols) protein is tRNA (guanine-N(7)-)-methyltransferase.